Here is a 479-residue protein sequence, read N- to C-terminus: Bifunctional protein HldE (479 aa).

The tract at residues 1–322 (MLAETQLAPI…AALERTAAQI (322 aa)) is ribokinase. 198–201 (NRRE) contributes to the ATP binding site. Asp267 is an active-site residue. Residues 350-479 (FTNGCFDLVH…TSSLVAKART (130 aa)) are cytidylyltransferase.

The protein in the N-terminal section; belongs to the carbohydrate kinase PfkB family. In the C-terminal section; belongs to the cytidylyltransferase family. Homodimer.

The catalysed reaction is D-glycero-beta-D-manno-heptose 7-phosphate + ATP = D-glycero-beta-D-manno-heptose 1,7-bisphosphate + ADP + H(+). The enzyme catalyses D-glycero-beta-D-manno-heptose 1-phosphate + ATP + H(+) = ADP-D-glycero-beta-D-manno-heptose + diphosphate. It functions in the pathway nucleotide-sugar biosynthesis; ADP-L-glycero-beta-D-manno-heptose biosynthesis; ADP-L-glycero-beta-D-manno-heptose from D-glycero-beta-D-manno-heptose 7-phosphate: step 1/4. Its pathway is nucleotide-sugar biosynthesis; ADP-L-glycero-beta-D-manno-heptose biosynthesis; ADP-L-glycero-beta-D-manno-heptose from D-glycero-beta-D-manno-heptose 7-phosphate: step 3/4. Catalyzes the phosphorylation of D-glycero-D-manno-heptose 7-phosphate at the C-1 position to selectively form D-glycero-beta-D-manno-heptose-1,7-bisphosphate. In terms of biological role, catalyzes the ADP transfer from ATP to D-glycero-beta-D-manno-heptose 1-phosphate, yielding ADP-D-glycero-beta-D-manno-heptose. This is Bifunctional protein HldE from Azorhizobium caulinodans (strain ATCC 43989 / DSM 5975 / JCM 20966 / LMG 6465 / NBRC 14845 / NCIMB 13405 / ORS 571).